Reading from the N-terminus, the 479-residue chain is Ribosomal protein uS12 methylthiotransferase RimO (479 aa).

The interval 1–34 (MTVNTFDPSKASPVTHASDSASKTPEPNAVAAPS) is disordered. Over residues 15 to 25 (THASDSASKTP) the composition is skewed to polar residues. Positions 39–151 (NRVGFVSLGC…VMGAVHGYIP (113 aa)) constitute an MTTase N-terminal domain. [4Fe-4S] cluster-binding residues include Cys-48, Cys-84, Cys-113, Cys-184, Cys-188, and Cys-191. The Radical SAM core domain maps to 170–407 (LTPRHYAYLK…METQQAISAA (238 aa)). Residues 410-476 (KQKVGYEMDV…DYDLTGIAVE (67 aa)) form the TRAM domain.

Belongs to the methylthiotransferase family. RimO subfamily. [4Fe-4S] cluster is required as a cofactor.

Its subcellular location is the cytoplasm. It catalyses the reaction L-aspartate(89)-[ribosomal protein uS12]-hydrogen + (sulfur carrier)-SH + AH2 + 2 S-adenosyl-L-methionine = 3-methylsulfanyl-L-aspartate(89)-[ribosomal protein uS12]-hydrogen + (sulfur carrier)-H + 5'-deoxyadenosine + L-methionine + A + S-adenosyl-L-homocysteine + 2 H(+). Catalyzes the methylthiolation of an aspartic acid residue of ribosomal protein uS12. This Saccharophagus degradans (strain 2-40 / ATCC 43961 / DSM 17024) protein is Ribosomal protein uS12 methylthiotransferase RimO.